A 150-amino-acid chain; its full sequence is 3-dehydroquinate dehydratase (150 aa).

Tyrosine 23 functions as the Proton acceptor in the catalytic mechanism. Asparagine 75, histidine 81, and aspartate 88 together coordinate substrate. The Proton donor role is filled by histidine 101. Substrate is bound by residues 102–103 (LS) and arginine 112.

It belongs to the type-II 3-dehydroquinase family. As to quaternary structure, homododecamer.

The catalysed reaction is 3-dehydroquinate = 3-dehydroshikimate + H2O. The protein operates within metabolic intermediate biosynthesis; chorismate biosynthesis; chorismate from D-erythrose 4-phosphate and phosphoenolpyruvate: step 3/7. Its function is as follows. Catalyzes a trans-dehydration via an enolate intermediate. The protein is 3-dehydroquinate dehydratase of Pseudomonas savastanoi pv. phaseolicola (strain 1448A / Race 6) (Pseudomonas syringae pv. phaseolicola (strain 1448A / Race 6)).